An 825-amino-acid polypeptide reads, in one-letter code: Breast cancer anti-estrogen resistance protein 3 homolog (825 aa).

Residue Ala2 is modified to N-acetylalanine. Ser32, Ser78, Ser83, Ser182, and Ser290 each carry phosphoserine. Positions 40 to 84 (EAYPDVSIHGTLPRKKKGPPPIRSCDSASHMGTLPHSKSPRQSSP) are disordered. An SH2 domain is found at 154-253 (WYHGRIPRQV…QSGAIIFQPI (100 aa)). The disordered stretch occupies residues 300 to 320 (DHSLPRGNLLRNKDKSGSQPA). An N6-methyllysine modification is found at Lys334. Ser358, Ser363, and Ser375 each carry phosphoserine. At Arg442 the chain carries Omega-N-methylarginine. Ser471 carries the phosphoserine modification. Residues 548–818 (DARVIAQHML…TALSRKLEPP (271 aa)) form the Ras-GEF domain. The interval 744-748 (LATAR) is mediates the interaction with BCAR1/p130CAS.

As to quaternary structure, part of a complex comprised of PTPRA, BCAR1, BCAR3 and SRC; the formation of the complex is dependent on integrin mediated-tyrosine phosphorylation of PTPRA. Within the complex, interacts (via SH2 domain) with PTPRA (when phosphorylated on 'Tyr-792'). Interacts (via Ras-GEF domain) with BCAR1. Interacts (via Ras-GEF domain) with NEDD9. Interacts with PTK2/FAK1. Interacts with PTPN1. Interacts (via SH2 domain) with EGFR (when tyrosine-phosphorylated). Phosphorylated on tyrosine residues.

Its subcellular location is the cytoplasm. The protein resides in the cell junction. It is found in the focal adhesion. Its function is as follows. Acts as an adapter protein downstream of several growth factor receptors to promote cell proliferation, migration, and redistribution of actin fibers. Specifically involved in INS/insulin signaling pathway by mediating MAPK1/ERK2-MAPK3/ERK1 activation and DNA synthesis. Promotes insulin-mediated membrane ruffling. In response to vasoconstrictor peptide EDN1, involved in the activation of RAP1 downstream of PTK2B via interaction with phosphorylated BCAR1. Inhibits cell migration and invasion via regulation of TGFB-mediated matrix digestion, actin filament rearrangement, and inhibition of invadopodia activity. May inhibit TGFB/SMAD signaling, via facilitating BCAR1 and SMAD2 and/or SMAD3 interaction. Regulates EGF-induced DNA synthesis. Required for the maintenance of ocular lens morphology and structural integrity, potentially via regulation of focal adhesion complex signaling. Acts upstream of PTPRA to regulate the localization of BCAR1 and PTPRA to focal adhesions, via regulation of SRC-mediated phosphorylation of PTPRA. Positively regulates integrin-induced tyrosine phosphorylation of BCAR1. Acts as a guanine nucleotide exchange factor (GEF) for small GTPases RALA, RAP1A and RRAS. However, in a contrasting study, lacks GEF activity towards RAP1. This Rattus norvegicus (Rat) protein is Breast cancer anti-estrogen resistance protein 3 homolog.